A 460-amino-acid polypeptide reads, in one-letter code: tRNA hydroxylation protein P (460 aa).

The protein belongs to the peptidase U32 family.

In terms of biological role, involved in prephenate-dependent formation of 5-hydroxyuridine (ho5U) modification at position 34 in tRNAs, the first step in 5-carboxymethoxyuridine (cmo5U) biosynthesis. The sequence is that of tRNA hydroxylation protein P from Haemophilus influenzae (strain ATCC 51907 / DSM 11121 / KW20 / Rd).